A 128-amino-acid polypeptide reads, in one-letter code: Large ribosomal subunit protein eL8 (128 aa).

This sequence belongs to the eukaryotic ribosomal protein eL8 family. In terms of assembly, part of the 50S ribosomal subunit. Probably part of the RNase P complex.

Its subcellular location is the cytoplasm. Functionally, multifunctional RNA-binding protein that recognizes the K-turn motif in ribosomal RNA, the RNA component of RNase P, box H/ACA, box C/D and box C'/D' sRNAs. The sequence is that of Large ribosomal subunit protein eL8 from Staphylothermus marinus (strain ATCC 43588 / DSM 3639 / JCM 9404 / F1).